We begin with the raw amino-acid sequence, 573 residues long: 2-isopropylmalate synthase (573 aa).

Residues 37-314 form the Pyruvate carboxyltransferase domain; sequence PRWLSTDLRD…DPQIDFSDID (278 aa). Mg(2+)-binding residues include Asp-46, His-253, His-255, and Asn-289. Positions 456–573 are regulatory domain; it reads NPDNPWGRIQ…VVSAVNRATR (118 aa).

It belongs to the alpha-IPM synthase/homocitrate synthase family. LeuA type 2 subfamily. In terms of assembly, homodimer. It depends on Mg(2+) as a cofactor.

The protein resides in the cytoplasm. The enzyme catalyses 3-methyl-2-oxobutanoate + acetyl-CoA + H2O = (2S)-2-isopropylmalate + CoA + H(+). Its pathway is amino-acid biosynthesis; L-leucine biosynthesis; L-leucine from 3-methyl-2-oxobutanoate: step 1/4. Catalyzes the condensation of the acetyl group of acetyl-CoA with 3-methyl-2-oxobutanoate (2-ketoisovalerate) to form 3-carboxy-3-hydroxy-4-methylpentanoate (2-isopropylmalate). This Streptomyces coelicolor (strain ATCC BAA-471 / A3(2) / M145) protein is 2-isopropylmalate synthase.